A 1742-amino-acid chain; its full sequence is Kinase non-catalytic C-lobe domain-containing protein 1 (1742 aa).

One can recognise a KIND 1 domain in the interval V37–G217. 2 disordered regions span residues W215–A288 and F365–S455. The residue at position 267 (S267) is a Phosphoserine. Positions L403–S412 are enriched in polar residues. Positions D426 to R445 are enriched in basic and acidic residues. Residues L456–E620 enclose the KIND 2 domain. Disordered regions lie at residues D703–T727, S744–A876, G948–I1006, and V1028–F1076. Over residues S711 to T727 the composition is skewed to basic and acidic residues. Residues G755–T771 show a composition bias toward low complexity. Residues V782–T791 are compositionally biased toward polar residues. Over residues S847–L861 the composition is skewed to basic and acidic residues. Residues P949 to E965 show a composition bias toward low complexity. Phosphoserine is present on S951. Residues G1043 to S1053 are compositionally biased toward polar residues. Residues H1112–S1177 adopt a coiled-coil conformation. The 129-residue stretch at K1239 to R1367 folds into the N-terminal Ras-GEF domain. A Ras-GEF domain is found at S1461–A1712.

In terms of assembly, interacts (via KIND2) with MAP2; the interaction enhances MAP2 phosphorylation and localizes KNDC1 to dendrites. In terms of tissue distribution, highly expressed in the brain and at low levels in the ovary. In the brain it is most prominently expressed in the cerebellum where it is restricted to the granular Purkinje cell layer.

Its subcellular location is the cell projection. The protein resides in the dendrite. The protein localises to the perikaryon. Its function is as follows. RAS-Guanine nucleotide exchange factor (GEF) that controls the negative regulation of neuronal dendrite growth by mediating a signaling pathway linking RAS and MAP2. May be involved in cellular senescence. The polypeptide is Kinase non-catalytic C-lobe domain-containing protein 1 (Mus musculus (Mouse)).